The sequence spans 475 residues: UDP-N-acetylmuramate--L-alanine ligase (475 aa).

An ATP-binding site is contributed by 114–120 (GTHGKTT).

This sequence belongs to the MurCDEF family.

Its subcellular location is the cytoplasm. It carries out the reaction UDP-N-acetyl-alpha-D-muramate + L-alanine + ATP = UDP-N-acetyl-alpha-D-muramoyl-L-alanine + ADP + phosphate + H(+). The protein operates within cell wall biogenesis; peptidoglycan biosynthesis. Functionally, cell wall formation. This chain is UDP-N-acetylmuramate--L-alanine ligase, found in Bartonella tribocorum (strain CIP 105476 / IBS 506).